The sequence spans 477 residues: Beta-agarase D (477 aa).

The first 20 residues, Met1 to Gly20, serve as a signal peptide directing secretion. Residues Tyr22–Ala378 enclose the GH16 domain. Residues Met94–Asn104, Asn123–Thr125, Glu174, Glu179, Arg206, and Glu340 each bind substrate. The Nucleophile role is filled by Glu174. Catalysis depends on Glu179, which acts as the Proton donor. Residues Asn382 to Glu391 are compositionally biased toward low complexity. A disordered region spans residues Asn382 to Pro402.

Belongs to the glycosyl hydrolase 16 family.

The protein resides in the secreted. The catalysed reaction is Hydrolysis of (1-&gt;4)-beta-D-galactosidic linkages in agarose, giving the tetramer as the predominant product.. Cleaves the beta-1,4-linkages between beta-D-galactose and alpha-L-3,6-anhydro-galactose residues in agarose. Cleaves agarose in a random manner with retention of the anomeric-bond configuration, producing beta-anomers that give rise progressively to alpha-anomers when mutarotation takes place. Requires at least 4 consecutive agarose units and is highly intolerant to modifications. The polypeptide is Beta-agarase D (agaD) (Zobellia galactanivorans (strain DSM 12802 / CCUG 47099 / CIP 106680 / NCIMB 13871 / Dsij)).